The following is an 814-amino-acid chain: Plakophilin-2 (814 aa).

A required for binding to single-stranded DNA region spans residues 1 to 329 (MAIPGSLGEC…MTLERAVNML (329 aa)). At S44 the chain carries Phosphoserine. Omega-N-methylarginine is present on R46. Phosphoserine occurs at positions 82 and 130. ARM repeat units follow at residues 200-240 (TCQH…SIKG), 309-352 (CDCL…ESFQ), 354-393 (SEARKRVNQLQGIPKLLQLLKVQNEDVQRAVCGALRNLVF), 503-549 (PDGR…NLSY), 604-644 (PRGI…NLTA), 652-691 (SVARMVVQKENGLQHTRKMLHVGDPSVKKTAVSLLRNLSR), 696-737 (QNEI…NLMQ), and 740-782 (YQNA…SLWA).

The protein belongs to the beta-catenin family. Interacts with DSC2. Interacts with JUP. Interacts with KRT5/CK5, KRT8/CK8, KRT14/CK14, KRT18/CK18 and VIM. Interacts (via N-terminus) with MARK3/C-TAK1. Interacts with DSP. Interacts with DSG1, DSG2 and DSG3. Interacts (via N-terminus) with CTNNB1. Interacts with CDH1. Interacts with the RNA polymerase III (Pol III) complex proteins POLR3A/RPC155, POLR3F/RPC39 and POLR3C/RPC82. Interacts with CTNNA3. Interacts (via N-terminus) with SCN5A/Nav1.5. Interacts with ANK3/ANKG and GJA1/CX43. In terms of tissue distribution, expressed in the heart (at protein level).

Its subcellular location is the nucleus. It is found in the cell junction. It localises to the desmosome. The protein localises to the cytoplasm. Functionally, a component of desmosome cell-cell junctions which are required for positive regulation of cellular adhesion. Regulates focal adhesion turnover resulting in changes in focal adhesion size, cell adhesion and cell spreading, potentially via transcriptional modulation of beta-integrins. Required to maintain gingival epithelial barrier function. Important component of the desmosome that is also required for localization of desmosome component proteins such as DSC2, DSG2 and JUP to the desmosome cell-cell junction. Required for the formation of desmosome cell junctions in cardiomyocytes, thereby required for the correct formation of the heart, specifically trabeculation and formation of the atria walls. Loss of desmosome cell junctions leads to mis-localization of DSP and DSG2 resulting in disruption of cell-cell adhesion and disordered intermediate filaments. Modulates profibrotic gene expression in cardiomyocytes via regulation of DSP expression and subsequent activation of downstream TGFB1 and MAPK14/p38 MAPK signaling. Required for cardiac sodium current propagation and electrical synchrony in cardiac myocytes, via ANK3 stabilization and modulation of SCN5A/Nav1.5 localization to cell-cell junctions. Required for mitochondrial function, nuclear envelope integrity and positive regulation of SIRT3 transcription via maintaining DES localization at its nuclear envelope and cell tip anchoring points, and thereby preserving regulation of the transcriptional program. Maintenance of nuclear envelope integrity protects against DNA damage and transcriptional dysregulation of genes, especially those involved in the electron transport chain, thereby preserving mitochondrial function and protecting against superoxide radical anion generation. Binds single-stranded DNA (ssDNA). May regulate the localization of GJA1 to gap junctions in intercalated disks of the heart. The sequence is that of Plakophilin-2 from Rattus norvegicus (Rat).